We begin with the raw amino-acid sequence, 181 residues long: CDP-diacylglycerol--glycerol-3-phosphate 3-phosphatidyltransferase (181 aa).

4 consecutive transmembrane segments (helical) span residues 8–28 (PNYL…LFYI), 35–55 (KLGA…GYIA), 64–84 (FGKM…TIML), and 148–168 (IIYL…LTII).

Belongs to the CDP-alcohol phosphatidyltransferase class-I family.

It is found in the cell membrane. The catalysed reaction is a CDP-1,2-diacyl-sn-glycerol + sn-glycerol 3-phosphate = a 1,2-diacyl-sn-glycero-3-phospho-(1'-sn-glycero-3'-phosphate) + CMP + H(+). It participates in phospholipid metabolism; phosphatidylglycerol biosynthesis; phosphatidylglycerol from CDP-diacylglycerol: step 1/2. Functionally, this protein catalyzes the committed step to the synthesis of the acidic phospholipids. The protein is CDP-diacylglycerol--glycerol-3-phosphate 3-phosphatidyltransferase (pgsA) of Rickettsia prowazekii (strain Madrid E).